The chain runs to 596 residues: Phosphoenolpyruvate carboxykinase [GTP] (596 aa).

Residues Arg-77 and 205–207 (YGG) each bind substrate. Mn(2+)-binding residues include Lys-214 and His-234. Ser-256 contacts substrate. 257–262 (ACGKTN) is a binding site for GTP. The active site involves Cys-258. Asp-283 contributes to the Mn(2+) binding site. Positions 362-388 (KKGSTEKAAHPNSRFTAPAKNNPAISP) are disordered. 373–375 (NSR) serves as a coordination point for substrate. GTP contacts are provided by residues Arg-375, Arg-406, and 499–502 (YGDN).

This sequence belongs to the phosphoenolpyruvate carboxykinase [GTP] family. Monomer. Mn(2+) is required as a cofactor.

Its subcellular location is the cytoplasm. It catalyses the reaction oxaloacetate + GTP = phosphoenolpyruvate + GDP + CO2. It functions in the pathway carbohydrate biosynthesis; gluconeogenesis. In terms of biological role, catalyzes the conversion of oxaloacetate (OAA) to phosphoenolpyruvate (PEP), the rate-limiting step in the metabolic pathway that produces glucose from lactate and other precursors derived from the citric acid cycle. The chain is Phosphoenolpyruvate carboxykinase [GTP] from Anaeromyxobacter dehalogenans (strain 2CP-1 / ATCC BAA-258).